A 310-amino-acid chain; its full sequence is MEFKHISVLLNECLDALDIKDNGIYVDCTLGGAGHSSHILERLSNEGLLIGIDQDRDALKAAKERLKRFENVKYVHSNFYDIDNILQNLDIPKVDGILMDLGVSSYQLDEGARGFSYMKDAPLDMRMNRDNDFSAYEIVNEYSEDELYKIIRNYGEERFAKRISNCIVNRRSDKPIETTMELVDIIKAAIPAKARREGPHPAKRTFQAIRIEVNSELKILNQTIEDGVNRLKPGGRMAIITFHSLEDRIVKLKFRELNDPCTCPREFPMCICGKKPSVRLVSRKGIEPTKEEVEENPRSRSAKLRIIEKL.

S-adenosyl-L-methionine is bound by residues 33 to 35 (AGH), Asp-53, Phe-79, Asp-100, and Gln-107.

It belongs to the methyltransferase superfamily. RsmH family.

The protein resides in the cytoplasm. It carries out the reaction cytidine(1402) in 16S rRNA + S-adenosyl-L-methionine = N(4)-methylcytidine(1402) in 16S rRNA + S-adenosyl-L-homocysteine + H(+). Its function is as follows. Specifically methylates the N4 position of cytidine in position 1402 (C1402) of 16S rRNA. The sequence is that of Ribosomal RNA small subunit methyltransferase H from Clostridium botulinum (strain Alaska E43 / Type E3).